The following is a 244-amino-acid chain: 5-oxoprolinase subunit A (244 aa).

It belongs to the LamB/PxpA family. In terms of assembly, forms a complex composed of PxpA, PxpB and PxpC.

The enzyme catalyses 5-oxo-L-proline + ATP + 2 H2O = L-glutamate + ADP + phosphate + H(+). Its function is as follows. Catalyzes the cleavage of 5-oxoproline to form L-glutamate coupled to the hydrolysis of ATP to ADP and inorganic phosphate. The chain is 5-oxoprolinase subunit A from Salmonella heidelberg (strain SL476).